The sequence spans 213 residues: Thiamine-phosphate synthase (213 aa).

4-amino-2-methyl-5-(diphosphooxymethyl)pyrimidine contacts are provided by residues glutamine 38 to lysine 42 and asparagine 73. 2 residues coordinate Mg(2+): aspartate 74 and aspartate 93. Serine 111 contributes to the 4-amino-2-methyl-5-(diphosphooxymethyl)pyrimidine binding site. A 2-[(2R,5Z)-2-carboxy-4-methylthiazol-5(2H)-ylidene]ethyl phosphate-binding site is contributed by threonine 137–serine 139. Lysine 140 provides a ligand contact to 4-amino-2-methyl-5-(diphosphooxymethyl)pyrimidine. Residues glycine 169 and isoleucine 189–serine 190 each bind 2-[(2R,5Z)-2-carboxy-4-methylthiazol-5(2H)-ylidene]ethyl phosphate.

The protein belongs to the thiamine-phosphate synthase family. Mg(2+) is required as a cofactor.

It catalyses the reaction 2-[(2R,5Z)-2-carboxy-4-methylthiazol-5(2H)-ylidene]ethyl phosphate + 4-amino-2-methyl-5-(diphosphooxymethyl)pyrimidine + 2 H(+) = thiamine phosphate + CO2 + diphosphate. The catalysed reaction is 2-(2-carboxy-4-methylthiazol-5-yl)ethyl phosphate + 4-amino-2-methyl-5-(diphosphooxymethyl)pyrimidine + 2 H(+) = thiamine phosphate + CO2 + diphosphate. It carries out the reaction 4-methyl-5-(2-phosphooxyethyl)-thiazole + 4-amino-2-methyl-5-(diphosphooxymethyl)pyrimidine + H(+) = thiamine phosphate + diphosphate. It functions in the pathway cofactor biosynthesis; thiamine diphosphate biosynthesis; thiamine phosphate from 4-amino-2-methyl-5-diphosphomethylpyrimidine and 4-methyl-5-(2-phosphoethyl)-thiazole: step 1/1. Condenses 4-methyl-5-(beta-hydroxyethyl)thiazole monophosphate (THZ-P) and 2-methyl-4-amino-5-hydroxymethyl pyrimidine pyrophosphate (HMP-PP) to form thiamine monophosphate (TMP). The sequence is that of Thiamine-phosphate synthase from Lysinibacillus sphaericus (strain C3-41).